We begin with the raw amino-acid sequence, 702 residues long: Methionine--tRNA ligase (702 aa).

The 'HIGH' region signature appears at 14 to 24 (PYANGPVHLGH). Cys146, Cys149, Cys159, and Cys162 together coordinate Zn(2+). Positions 344–348 (KFSKS) match the 'KMSKS' region motif. Lys347 provides a ligand contact to ATP. One can recognise a tRNA-binding domain in the interval 601 to 702 (EFLKVDLRVA…GKEINGKKIQ (102 aa)).

The protein belongs to the class-I aminoacyl-tRNA synthetase family. MetG type 1 subfamily. Homodimer. Requires Zn(2+) as cofactor.

It is found in the cytoplasm. The catalysed reaction is tRNA(Met) + L-methionine + ATP = L-methionyl-tRNA(Met) + AMP + diphosphate. Its function is as follows. Is required not only for elongation of protein synthesis but also for the initiation of all mRNA translation through initiator tRNA(fMet) aminoacylation. This Chlorobium phaeobacteroides (strain DSM 266 / SMG 266 / 2430) protein is Methionine--tRNA ligase.